A 568-amino-acid chain; its full sequence is Protein yellow (568 aa).

A signal peptide spans M1–A28. N-linked (GlcNAc...) asparagine glycans are attached at residues N151 and N222.

Belongs to the major royal jelly protein family.

It is found in the secreted. Its function is as follows. Controls the pigmentation pattern of the adult cuticle and larval mouth parts. In Drosophila subobscura (Fruit fly), this protein is Protein yellow (y).